The chain runs to 193 residues: MSQQMTLSVQKREGLGKGANRKLRTAKKVPGIFYNSEGKNIPVAIDGTQLEKLYETAGKTTVFNLDIEGETAPCLIWQIERHPYKPFFTHVDLFGVDMEKPIKARIPLKITGVAKGTKIGGRMEVYRDFVDVFTKPGSMPKVIDINVSNMEMGDAVHVADLKLEDGHCIYDSNYVIVRVSAPRGGKGEEGEDA.

The protein belongs to the bacterial ribosomal protein bL25 family. CTC subfamily. As to quaternary structure, part of the 50S ribosomal subunit; part of the 5S rRNA/L5/L18/L25 subcomplex. Contacts the 5S rRNA. Binds to the 5S rRNA independently of L5 and L18.

Functionally, this is one of the proteins that binds to the 5S RNA in the ribosome where it forms part of the central protuberance. The protein is Large ribosomal subunit protein bL25 of Oleidesulfovibrio alaskensis (strain ATCC BAA-1058 / DSM 17464 / G20) (Desulfovibrio alaskensis).